A 202-amino-acid polypeptide reads, in one-letter code: Pyridoxal 5'-phosphate synthase subunit PdxT (202 aa).

Position 52-54 (52-54) interacts with L-glutamine; the sequence is GES. Cys-84 (nucleophile) is an active-site residue. Residues Arg-116 and 143-144 each bind L-glutamine; that span reads IR. Catalysis depends on charge relay system residues His-184 and Glu-186.

This sequence belongs to the glutaminase PdxT/SNO family. In terms of assembly, in the presence of PdxS, forms a dodecamer of heterodimers. Only shows activity in the heterodimer.

The enzyme catalyses aldehydo-D-ribose 5-phosphate + D-glyceraldehyde 3-phosphate + L-glutamine = pyridoxal 5'-phosphate + L-glutamate + phosphate + 3 H2O + H(+). It carries out the reaction L-glutamine + H2O = L-glutamate + NH4(+). Its pathway is cofactor biosynthesis; pyridoxal 5'-phosphate biosynthesis. Its function is as follows. Catalyzes the hydrolysis of glutamine to glutamate and ammonia as part of the biosynthesis of pyridoxal 5'-phosphate. The resulting ammonia molecule is channeled to the active site of PdxS. The protein is Pyridoxal 5'-phosphate synthase subunit PdxT of Pyrobaculum neutrophilum (strain DSM 2338 / JCM 9278 / NBRC 100436 / V24Sta) (Thermoproteus neutrophilus).